A 956-amino-acid polypeptide reads, in one-letter code: RNA-silencing factor ers1 (956 aa).

The protein localises to the cytoplasm. The protein resides in the cytoskeleton. Its subcellular location is the microtubule organizing center. It localises to the spindle pole body. Its function is as follows. Involved in RNAi-dependent heterochromatin formation and centromeric silencing. Required for the conversion of centromeric pre-small interfering RNA transcripts into small interfering RNAs, histone H3 'Lys9' methylation, and the recruitment of the RITS complex to centromeric sequences. The chain is RNA-silencing factor ers1 (ers1) from Schizosaccharomyces pombe (strain 972 / ATCC 24843) (Fission yeast).